A 190-amino-acid polypeptide reads, in one-letter code: Peptidyl-tRNA hydrolase (190 aa).

Y14 is a binding site for tRNA. H19 serves as the catalytic Proton acceptor. Positions 64, 66, and 112 each coordinate tRNA.

Belongs to the PTH family. As to quaternary structure, monomer.

The protein localises to the cytoplasm. The enzyme catalyses an N-acyl-L-alpha-aminoacyl-tRNA + H2O = an N-acyl-L-amino acid + a tRNA + H(+). Its function is as follows. Hydrolyzes ribosome-free peptidyl-tRNAs (with 1 or more amino acids incorporated), which drop off the ribosome during protein synthesis, or as a result of ribosome stalling. Functionally, catalyzes the release of premature peptidyl moieties from peptidyl-tRNA molecules trapped in stalled 50S ribosomal subunits, and thus maintains levels of free tRNAs and 50S ribosomes. The sequence is that of Peptidyl-tRNA hydrolase from Chlorobium phaeovibrioides (strain DSM 265 / 1930) (Prosthecochloris vibrioformis (strain DSM 265)).